We begin with the raw amino-acid sequence, 466 residues long: Asparagine--tRNA ligase (466 aa).

The protein belongs to the class-II aminoacyl-tRNA synthetase family. As to quaternary structure, homodimer.

It localises to the cytoplasm. It catalyses the reaction tRNA(Asn) + L-asparagine + ATP = L-asparaginyl-tRNA(Asn) + AMP + diphosphate + H(+). The chain is Asparagine--tRNA ligase from Syntrophobacter fumaroxidans (strain DSM 10017 / MPOB).